We begin with the raw amino-acid sequence, 1058 residues long: Isoleucine--tRNA ligase (1058 aa).

A 'HIGH' region motif is present at residues 48–58; it reads PYTTGHIHLGT. The 'KMSKS' region motif lies at 596–600; sequence KMSKS. Position 599 (Lys-599) interacts with ATP.

It belongs to the class-I aminoacyl-tRNA synthetase family. IleS type 2 subfamily. Monomer. Zn(2+) is required as a cofactor.

It is found in the cytoplasm. It catalyses the reaction tRNA(Ile) + L-isoleucine + ATP = L-isoleucyl-tRNA(Ile) + AMP + diphosphate. Functionally, catalyzes the attachment of isoleucine to tRNA(Ile). As IleRS can inadvertently accommodate and process structurally similar amino acids such as valine, to avoid such errors it has two additional distinct tRNA(Ile)-dependent editing activities. One activity is designated as 'pretransfer' editing and involves the hydrolysis of activated Val-AMP. The other activity is designated 'posttransfer' editing and involves deacylation of mischarged Val-tRNA(Ile). The polypeptide is Isoleucine--tRNA ligase (Methanosarcina barkeri (strain Fusaro / DSM 804)).